Here is a 288-residue protein sequence, read N- to C-terminus: Elongation factor Ts (288 aa).

Residues 79-82 (TDFV) are involved in Mg(2+) ion dislocation from EF-Tu.

It belongs to the EF-Ts family.

The protein resides in the cytoplasm. In terms of biological role, associates with the EF-Tu.GDP complex and induces the exchange of GDP to GTP. It remains bound to the aminoacyl-tRNA.EF-Tu.GTP complex up to the GTP hydrolysis stage on the ribosome. In Ehrlichia ruminantium (strain Gardel), this protein is Elongation factor Ts.